A 144-amino-acid polypeptide reads, in one-letter code: MLVPKRVKHRKVQRGHMRGEAKGGKTVTFGEFGLQALDSHWISNRQIEAARIAMTRYMKRGGKVWIKIFPQLSYTSKGVGVRMGNGKGAPEGWVAPVKRGKVMFEVGGVSEEVAREALRLAGHKLPVRTKIVQREEVGGQSNEK.

Residues Met-1 to His-16 show a composition bias toward basic residues. Residues Met-1–Glu-20 form a disordered region.

Belongs to the universal ribosomal protein uL16 family. In terms of assembly, part of the 50S ribosomal subunit.

Functionally, binds 23S rRNA and is also seen to make contacts with the A and possibly P site tRNAs. The chain is Large ribosomal subunit protein uL16 from Limosilactobacillus reuteri (strain DSM 20016) (Lactobacillus reuteri).